Reading from the N-terminus, the 264-residue chain is MSSTLYRRQLLKLLGMSVLGTSFSSCVTSPARAKTVNWGYIGKVGPEHWGELSPDFALCQIGRKQTPIDLQIADVKDVHSSSQDLLVTNYQPTALHLINNGKTVQVNYQPGSYLKYAHQKFELLQFHFHHFSEHRVDGKLYDMELHLVHRSKSGDLAVMGIFLQAGAFNPTLQIIWDATPQNQGTDKRIEDINIDASQFLPAQHRFFTYSGSLTTPPCSENVLWCVMATPIEASPAQIAKFSQMFPQNARPVQPLNDRLVIEAI.

A signal peptide (tat-type signal) is located at residues 1–33 (MSSTLYRRQLLKLLGMSVLGTSFSSCVTSPARA). Residues 36-264 (VNWGYIGKVG…LNDRLVIEAI (229 aa)) form the Alpha-carbonic anhydrase domain. 3 residues coordinate Zn(2+): His-127, His-129, and His-146. Residue 214–215 (TT) participates in substrate binding.

The protein belongs to the alpha-carbonic anhydrase family. It depends on Zn(2+) as a cofactor. In terms of processing, predicted to be exported by the Tat system. The position of the signal peptide cleavage has not been experimentally proven.

The enzyme catalyses hydrogencarbonate + H(+) = CO2 + H2O. Reversible hydration of carbon dioxide. The polypeptide is Carbonic anhydrase (ecaA) (Nostoc sp. (strain PCC 7120 / SAG 25.82 / UTEX 2576)).